The primary structure comprises 392 residues: Caveolae-associated protein 1 (392 aa).

An N-acetylmethionine modification is found at methionine 1. A compositionally biased stretch (basic and acidic residues) spans 1 to 10 (MEDVTLHIVE). Positions 1-45 (MEDVTLHIVERPYSGYPDASSEGPEPTPGEARATEEPSGTGSDEL) are disordered. A required for homotrimerization and for interaction with CAVIN2 and CAVIN3 region spans residues 1-100 (MEDVTLHIVE…IQGELSKLGK (100 aa)). Residues serine 21 and serine 38 each carry the phosphoserine modification. Threonine 40 is subject to Phosphothreonine. Serine 42 and serine 48 each carry phosphoserine. Residues 54–64 (VLVLSLLDKII) form a nuclear export signal region. The interval 55-77 (LVLSLLDKIIGAVDQIQLTQAQL) is leucine-zipper 1. Lysine 118 is covalently cross-linked (Glycyl lysine isopeptide (Lys-Gly) (interchain with G-Cter in SUMO2)). Position 120 is a phosphoserine (serine 120). Lysine 124 participates in a covalent cross-link: Glycyl lysine isopeptide (Lys-Gly) (interchain with G-Cter in SUMO2). Positions 138–154 (KKLEVNEAELLRRRNFK) are nuclear localization signal. Tyrosine 158 is subject to Phosphotyrosine. Residue lysine 163 forms a Glycyl lysine isopeptide (Lys-Gly) (interchain with G-Cter in SUMO1); alternate linkage. A Glycyl lysine isopeptide (Lys-Gly) (interchain with G-Cter in SUMO2); alternate cross-link involves residue lysine 163. A Glycyl lysine isopeptide (Lys-Gly) (interchain with G-Cter in SUMO2) cross-link involves residue lysine 167. Residues 168 to 188 (LSVSKSLKESEALPEKEGDEL) form a leucine-zipper 2 region. Residues serine 169 and serine 171 each carry the phosphoserine modification. A Glycyl lysine isopeptide (Lys-Gly) (interchain with G-Cter in SUMO2) cross-link involves residue lysine 172. Phosphoserine occurs at positions 173 and 177. Residues 173-183 (SLKESEALPEK) are compositionally biased toward basic and acidic residues. Residues 173-198 (SLKESEALPEKEGDELGEGERPEEDA) form a disordered region. The span at 184-198 (EGDELGEGERPEEDA) shows a compositional bias: acidic residues. A coiled-coil region spans residues 201–284 (IELSSDEAVE…RMNKLGTRLV (84 aa)). Phosphoserine occurs at positions 204 and 205. Positions 235 to 251 (KKAFSKEKMEKTKVRTR) are nuclear localization signal. A leucine-zipper 3 region spans residues 259-299 (LKTKENLEKTRHTLEKRMNKLGTRLVPVERREKLKTSRDKL). The residue at position 302 (serine 302) is a Phosphoserine. Threonine 304 is subject to Phosphothreonine. At tyrosine 310 the chain carries Phosphotyrosine. A Glycyl lysine isopeptide (Lys-Gly) (interchain with G-Cter in SUMO2) cross-link involves residue lysine 328. Residues 347–367 (GPDDDEVGAERGAETDLLRGS) form a disordered region. Residues 354-363 (GAERGAETDL) are compositionally biased toward basic and acidic residues. Residues serine 367, serine 368, serine 381, serine 389, and serine 391 each carry the phosphoserine modification.

This sequence belongs to the CAVIN family. Component of the CAVIN complex composed of CAVIN1, CAVIN2, CAVIN3 and CAVIN4. Interacts with RNA polymerase I subunit POLR1A/RPA1 and TTF1. Binds the 3' end of pre-rRNA. Interacts with transcription factor ZNF148. Interacts with LIPE in the adipocyte cytoplasm. Interacts with CAV1, CAV3, CAVIN2, CAVIN3 and CAVIN4. Phosphorylated. Present in active and inactive forms. Changes in phosphorylation pattern may alter activity. Phosphorylation at Tyr-158 is essential for its function in the regulation of ribosomal transcriptional activity. In terms of processing, monoubiquitinated. Expressed in the adipocyte (at protein level). Expressed in all striated and smooth muscles tested including diaphragm, esophageal striated muscle, fibroblast, endocardial endothelium, epicardial mesothelium, intestinal smooth muscle, masseter, soleus muscle, vascular smooth muscle and white gastrocnemius muscle (at protein level). Expressed in the endothelium and perineural sheath (at protein level). Not expressed in hepatocytes.

The protein localises to the membrane. Its subcellular location is the caveola. It localises to the cell membrane. The protein resides in the microsome. It is found in the endoplasmic reticulum. The protein localises to the cytoplasm. Its subcellular location is the cytosol. It localises to the mitochondrion. The protein resides in the nucleus. Functionally, plays an important role in caveolae formation and organization. Essential for the formation of caveolae in all tissues. Core component of the CAVIN complex which is essential for recruitment of the complex to the caveolae in presence of calveolin-1 (CAV1). Essential for normal oligomerization of CAV1. Promotes ribosomal transcriptional activity in response to metabolic challenges in the adipocytes and plays an important role in the formation of the ribosomal transcriptional loop. Dissociates transcription complexes paused by DNA-bound TTF1, thereby releasing both RNA polymerase I and pre-RNA from the template. The caveolae biogenesis pathway is required for the secretion of proteins such as GASK1A. This chain is Caveolae-associated protein 1, found in Rattus norvegicus (Rat).